Here is a 675-residue protein sequence, read N- to C-terminus: Acetyl-coenzyme A synthetase 1 (675 aa).

Residues 1–10 (MPESTQQSHL) are compositionally biased toward polar residues. The segment at 1-32 (MPESTQQSHLSLDHEKMQQPPKGFTERSKTKP) is disordered. Residues 212–215 (RGGK) and threonine 331 contribute to the CoA site. ATP contacts are provided by residues 407-409 (GEP), 431-436 (DTYWQT), aspartate 522, and arginine 537. Serine 545 is a binding site for CoA. Residue arginine 548 coordinates ATP. Residue arginine 609 coordinates CoA.

The protein belongs to the ATP-dependent AMP-binding enzyme family.

The enzyme catalyses acetate + ATP + CoA = acetyl-CoA + AMP + diphosphate. The chain is Acetyl-coenzyme A synthetase 1 (ACS1) from Candida albicans (Yeast).